The following is a 206-amino-acid chain: MCAAQRSAAALAAVAPRSVYAFSARPLAGGEPISLGSLRGKVLLIENVASLUGTTVRDYTQMNELQRRLGPRGLVVLGFPCNQFGHQENAKNGEILNCLKYVRPGGGFEPNFMLFEKCEVNGANAHPLFAFLREALPTPSDDATALMTDPKFITWSPVCRNDIAWNFEKFLVGPDGVPLRRYSRRFLTIDIEPDIEALLSQEPSSA.

Phosphoserine is present on S37. The active site involves U52. Residue U52 is a non-standard amino acid, selenocysteine. Residues K91, K117, and K151 each carry the N6-acetyllysine; alternate modification. Residues K91, K117, and K151 each carry the N6-succinyllysine; alternate modification. Phosphoserine occurs at positions 200 and 204.

It belongs to the glutathione peroxidase family. In terms of assembly, homotetramer. Interacts with MIEN1. During periods of oxidative stress, Sec-52 may react with a superoxide radical, irreversibly lose hydroselenide and be converted to dehydroalanine.

It is found in the cytoplasm. The protein localises to the mitochondrion. The enzyme catalyses 2 glutathione + H2O2 = glutathione disulfide + 2 H2O. The catalysed reaction is a hydroperoxy polyunsaturated fatty acid + 2 glutathione = a hydroxy polyunsaturated fatty acid + glutathione disulfide + H2O. It carries out the reaction tert-butyl hydroperoxide + 2 glutathione = tert-butanol + glutathione disulfide + H2O. It catalyses the reaction cumene hydroperoxide + 2 glutathione = 2-phenylpropan-2-ol + glutathione disulfide + H2O. The enzyme catalyses (13S)-hydroperoxy-(9Z,11E)-octadecadienoate + 2 glutathione = (13S)-hydroxy-(9Z,11E)-octadecadienoate + glutathione disulfide + H2O. The catalysed reaction is (9S)-hydroperoxy-(10E,12Z)-octadecadienoate + 2 glutathione = (9S)-hydroxy-(10E,12Z)-octadecadienoate + glutathione disulfide + H2O. It carries out the reaction (5S)-hydroperoxy-(6E,8Z,11Z,14Z)-eicosatetraenoate + 2 glutathione = (5S)-hydroxy-(6E,8Z,11Z,14Z)-eicosatetraenoate + glutathione disulfide + H2O. It catalyses the reaction (12S)-hydroperoxy-(5Z,8Z,10E,14Z)-eicosatetraenoate + 2 glutathione = (12S)-hydroxy-(5Z,8Z,10E,14Z)-eicosatetraenoate + glutathione disulfide + H2O. The enzyme catalyses (12R)-hydroperoxy-(5Z,8Z,10E,14Z)-eicosatetraenoate + 2 glutathione = (12R)-hydroxy-(5Z,8Z,10E,14Z)-eicosatetraenoate + glutathione disulfide + H2O. The catalysed reaction is (15S)-hydroperoxy-(5Z,8Z,11Z,13E)-eicosatetraenoate + 2 glutathione = (15S)-hydroxy-(5Z,8Z,11Z,13E)-eicosatetraenoate + glutathione disulfide + H2O. It carries out the reaction (5S)-hydroperoxy-(6E,8Z,11Z,14Z,17Z)-eicosapentaenoate + 2 glutathione = (5S)-hydroxy-(6E,8Z,11Z,14Z,17Z)-eicosapentaenoate + glutathione disulfide + H2O. It catalyses the reaction (12S)-hydroperoxy-(5Z,8Z,10E,14Z,17Z)-eicosapentaenoate + 2 glutathione = (12S)-hydroxy-(5Z,8Z,10E,14Z,17Z)-eicosapentaenoate + glutathione disulfide + H2O. The enzyme catalyses (15S)-hydroperoxy-(5Z,8Z,11Z,13E,17Z)-eicosapentaenoate + 2 glutathione = (15S)-hydroxy-(5Z,8Z,11Z,13E,17Z)-eicosapentaenoate + glutathione disulfide + H2O. The catalysed reaction is (15S)-hydroperoxy-(11Z,13E)-eicosadienoate + 2 glutathione = (15S)-hydroxy-(11Z,13E)-eicosadienoate + glutathione disulfide + H2O. It carries out the reaction (17S)-hydroperoxy-(4Z,7Z,10Z,13Z,15E,19Z)-docosahexaenoate + 2 glutathione = (17S)-hydroxy-(4Z,7Z,10Z,13Z,15E,19Z)-docosahexaenoate + glutathione disulfide + H2O. Functionally, catalyzes the reduction of hydroperoxides in a glutathione-dependent manner thus regulating cellular redox homeostasis. Can reduce small soluble hydroperoxides such as H2O2, cumene hydroperoxide and tert-butyl hydroperoxide, as well as several fatty acid-derived hydroperoxides. In platelets catalyzes the reduction of 12-hydroperoxyeicosatetraenoic acid, the primary product of the arachidonate 12-lipoxygenase pathway. This Sus scrofa (Pig) protein is Glutathione peroxidase 1 (GPX1).